The sequence spans 694 residues: Elongation factor G (694 aa).

The tr-type G domain maps to 9-288 (DAIRNIGIMA…VIVKWLPSPL (280 aa)). GTP contacts are provided by residues 18-25 (AHIDAGKT), 82-86 (DTPGH), and 136-139 (NKMD).

This sequence belongs to the TRAFAC class translation factor GTPase superfamily. Classic translation factor GTPase family. EF-G/EF-2 subfamily.

The protein localises to the cytoplasm. Catalyzes the GTP-dependent ribosomal translocation step during translation elongation. During this step, the ribosome changes from the pre-translocational (PRE) to the post-translocational (POST) state as the newly formed A-site-bound peptidyl-tRNA and P-site-bound deacylated tRNA move to the P and E sites, respectively. Catalyzes the coordinated movement of the two tRNA molecules, the mRNA and conformational changes in the ribosome. The sequence is that of Elongation factor G (fusA) from Chlamydia muridarum (strain MoPn / Nigg).